Consider the following 601-residue polypeptide: MVMSELRWHTASPEDNKNSLKRDLLKSTPTSAREAAVHIMQNRYISRLSRSPSPLQSNASDCDDNNSSVGTSSDRCRSPLSPALSLSHQQAKRQLMSLQPHPAHHHHNPHHLNHLNHHQYKQEEDYDDANGGALNLTSDNSRHSTQSPSNSVKSATASPVPVISVPSPVPPMISPVLAPSGCGSTTPNSMAAAAAAAAAVASTMGSGISPLLALPGMSSPQAQLAAAGLGMNNPLLTGSLSPQDFAQFHQLLQQRQVALTQQFNSYMELLRSGSLGLAQDDPALTAQVAAAQFLMQSQLQALSQASQQLQALQKQQQRQVDEPLQLNHKMTQQPRSSTPHSIRSPIAIRSPASSPQQLHHHHHHPLQITPPSSAASLKLSGMLTPSTPTSGTQMSQGTTTPQPKTVASAAAARAAGEPSPEETTDLEELEQFAKTFKQRRIKLGFTQGDVGLAMGKLYGNDFSQTTISRFEALNLSFKNMCKLKPLLQKWLDDADRTIQATGGVFDPAALQATVSTPEIIGRRRKKRTSIETTIRGALEKAFLANQKPTSEEITQLADRLSMEKEVVRVWFCNRRQKEKRINPSLDSPTGADDDESSYMMH.

Over residues 1–25 (MVMSELRWHTASPEDNKNSLKRDLL) the composition is skewed to basic and acidic residues. 5 disordered regions span residues 1-32 (MVMS…PTSA), 49-94 (SRSP…AKRQ), 121-158 (KQEE…ATAS), 351-425 (PASS…ETTD), and 581-601 (INPS…YMMH). The span at 49 to 68 (SRSPSPLQSNASDCDDNNSS) shows a compositional bias: low complexity. A compositionally biased stretch (polar residues) spans 135–157 (NLTSDNSRHSTQSPSNSVKSATA). Over residues 384 to 415 (TPSTPTSGTQMSQGTTTPQPKTVASAAAARAA) the composition is skewed to low complexity. Positions 421–495 (EETTDLEELE…LLQKWLDDAD (75 aa)) constitute a POU-specific domain. A DNA-binding region (homeobox) is located at residues 523-582 (RRKKRTSIETTIRGALEKAFLANQKPTSEEITQLADRLSMEKEVVRVWFCNRRQKEKRIN). Over residues 591–601 (ADDDESSYMMH) the composition is skewed to acidic residues.

This sequence belongs to the POU transcription factor family. Class-2 subfamily. Initial expression in cellular blastoderm stage, then in ectodermal stripes during germband extension. Broad expression in the neuroectoderm followed by limitation to discrete subsets of CNS cells, and expression in specific PNS neurons and support cells.

The protein localises to the nucleus. DNA-binding regulatory protein implicated in early development. Involved in neuronal cell fate decision. Repressed directly or indirectly by the BX-C homeotic proteins. This is Protein nubbin (nub) from Drosophila melanogaster (Fruit fly).